A 250-amino-acid chain; its full sequence is Urease accessory protein UreG 3 (250 aa).

Residues 1 to 24 are disordered; the sequence is MPDNASAQQPGQPAQGPNEHYHQP. A compositionally biased stretch (low complexity) spans 7–17; it reads AQQPGQPAQGP. Residue 37-44 coordinates GTP; sequence GPVGTGKS. The disordered stretch occupies residues 230–250; the sequence is GTHVPTDPGPMAPHSHSHDGS.

Belongs to the SIMIBI class G3E GTPase family. UreG subfamily. As to quaternary structure, homodimer. UreD, UreF and UreG form a complex that acts as a GTP-hydrolysis-dependent molecular chaperone, activating the urease apoprotein by helping to assemble the nickel containing metallocenter of UreC. The UreE protein probably delivers the nickel.

The protein localises to the cytoplasm. In terms of biological role, facilitates the functional incorporation of the urease nickel metallocenter. This process requires GTP hydrolysis, probably effectuated by UreG. In Streptomyces griseus subsp. griseus (strain JCM 4626 / CBS 651.72 / NBRC 13350 / KCC S-0626 / ISP 5235), this protein is Urease accessory protein UreG 3.